We begin with the raw amino-acid sequence, 909 residues long: GTPase activating protein homolog 4 (909 aa).

In terms of domain architecture, F-BAR spans 1-257 (MASLIGSAKL…PTPDFQFESC (257 aa)). The region spanning 322 to 513 (IPIEEIMFKQ…LIIEGYLKLS (192 aa)) is the Rho-GAP domain. The disordered stretch occupies residues 529–909 (IPSFSNNNNN…QRVPPPPSQS (381 aa)). Composition is skewed to low complexity over residues 533-562 (SNNNNNSTTTTTTTTTTTVPSSTSTNITTN) and 571-602 (SSTTPLPSLTTFSQSQSSSPPNQPSPSITPQQ). Residues 609–625 (SYQPPQPPPTMAPPPLF) show a composition bias toward pro residues. Positions 651–674 (QYTQSSSNLPPIQLGVTNSPSKPQ) are enriched in polar residues. Positions 672–809 (KPQLSDKQKE…QQLQQQSNGS (138 aa)) form a coiled coil. Residues 675-716 (LSDKQKEKEKEKEKEKEKEKEREKEKEKEKEKEKEKEKEKEK) are compositionally biased toward basic and acidic residues. The span at 723-741 (SSSTSPNSSSLSISNFLSS) shows a compositional bias: low complexity. Over residues 742 to 765 (NKDKDKEKDKEKEKEKEKEKDKEI) the composition is skewed to basic and acidic residues. Residues 767–785 (ATNSTPEKPVSNRMSLIFS) show a composition bias toward polar residues. Low complexity-rich tracts occupy residues 786 to 828 (QQLQ…MSPS) and 843 to 892 (SGTS…ELKS).

The protein localises to the cytoplasm. It is found in the contractile vacuole. Rho GTPase-activating protein involved in the signal transduction pathway. The polypeptide is GTPase activating protein homolog 4 (mgp4) (Dictyostelium discoideum (Social amoeba)).